Reading from the N-terminus, the 624-residue chain is Protein NRT1/ PTR FAMILY 6.1 (624 aa).

A disordered region spans residues 1–20 (MVASEIKSPVSVPETPGSSS). 2 consecutive transmembrane segments (helical) span residues 83–100 (MAYFGLSVNMVAFMFYVM) and 114–134 (FLGISQASSVLGGFLADAYLG). Thr138 is subject to Phosphothreonine. 10 helical membrane passes run 139–159 (IAIFTTMYLVGLIGITLGASL), 184–204 (SWQMLYLYTVLYITGFGAAGI), 230–250 (FFNFFYLSVTLGAIIAFTLVV), 258–278 (WGMAFGTLAVAMGISNALFFA), 378–398 (LIPIPTCTIMLSLVLTEYLTL), 422–442 (VFPGLSIFLILSLYYSVFVPI), 459–479 (VGIGLAVSIISVAWAGLFENY), 504–524 (WLLIQYCLIGIAEVFCIVGLL), 537–557 (SIGSAYAALAGGLGCFAATIL), and 585–605 (CLYWLLTLLSFLNFCVFLWSA).

This sequence belongs to the major facilitator superfamily. Proton-dependent oligopeptide transporter (POT/PTR) (TC 2.A.17) family. As to expression, expressed in flower and siliques.

The protein resides in the membrane. In Arabidopsis thaliana (Mouse-ear cress), this protein is Protein NRT1/ PTR FAMILY 6.1 (NPF6.1).